Reading from the N-terminus, the 444-residue chain is Homogentisate 1,2-dioxygenase (444 aa).

Residue histidine 298 is the Proton acceptor of the active site. Residues histidine 341 and glutamate 347 each coordinate Fe cation. Residues tyrosine 356 and histidine 377 each contribute to the homogentisate site. Histidine 377 contributes to the Fe cation binding site.

This sequence belongs to the homogentisate dioxygenase family. As to quaternary structure, hexamer; dimer of trimers. Requires Fe cation as cofactor.

The enzyme catalyses homogentisate + O2 = 4-maleylacetoacetate + H(+). Its pathway is amino-acid degradation; L-phenylalanine degradation; acetoacetate and fumarate from L-phenylalanine: step 4/6. Functionally, involved in the catabolism of homogentisate (2,5-dihydroxyphenylacetate or 2,5-OH-PhAc), a central intermediate in the degradation of phenylalanine and tyrosine. Catalyzes the oxidative ring cleavage of the aromatic ring of homogentisate to yield maleylacetoacetate. This is Homogentisate 1,2-dioxygenase from Burkholderia orbicola (strain AU 1054).